Consider the following 227-residue polypeptide: 2-C-methyl-D-erythritol 4-phosphate cytidylyltransferase (227 aa).

This sequence belongs to the IspD/TarI cytidylyltransferase family. IspD subfamily.

It carries out the reaction 2-C-methyl-D-erythritol 4-phosphate + CTP + H(+) = 4-CDP-2-C-methyl-D-erythritol + diphosphate. Its pathway is isoprenoid biosynthesis; isopentenyl diphosphate biosynthesis via DXP pathway; isopentenyl diphosphate from 1-deoxy-D-xylulose 5-phosphate: step 2/6. Its function is as follows. Catalyzes the formation of 4-diphosphocytidyl-2-C-methyl-D-erythritol from CTP and 2-C-methyl-D-erythritol 4-phosphate (MEP). The protein is 2-C-methyl-D-erythritol 4-phosphate cytidylyltransferase of Tolumonas auensis (strain DSM 9187 / NBRC 110442 / TA 4).